A 158-amino-acid polypeptide reads, in one-letter code: MQVMTSRFGTLEINPSDLLHFPQGIPAFEHLKEFFFYPIPENPAFTWLQAAADPEVAFLLVDPFLFFPGYAVDLPARLQEELAIKDPADALVYAVVTIPDGDIRRATANLVGPIIINPTVRLGMQLILEGTKYTTRHQLFKESFSDDESIPSSGGNEG.

It belongs to the FliW family. In terms of assembly, interacts with translational regulator CsrA and flagellin(s).

The protein resides in the cytoplasm. Its function is as follows. Acts as an anti-CsrA protein, binds CsrA and prevents it from repressing translation of its target genes, one of which is flagellin. Binds to flagellin and participates in the assembly of the flagellum. This chain is Flagellar assembly factor FliW, found in Moorella thermoacetica (strain ATCC 39073 / JCM 9320).